The chain runs to 863 residues: Potassium/sodium hyperpolarization-activated cyclic nucleotide-gated channel 2 (863 aa).

Positions 1 to 10 are enriched in gly residues; it reads MDARGGGGRP. The segment at 1 to 131 is disordered; the sequence is MDARGGGGRP…AGPAGEPRGS (131 aa). The Cytoplasmic segment spans residues 1–188; that stretch reads MDARGGGGRP…PYSDFRFYWD (188 aa). Over residues 17–47 the composition is skewed to pro residues; it reads TPAPGPPPPPPPPAPPQPQPPPAPPPNPTTP. The segment covering 106 to 128 has biased composition (low complexity); the sequence is GAASGPSAAEEAGSEEAGPAGEP. A phosphoserine mark is found at Ser-119 and Ser-134. The involved in subunit assembly stretch occupies residues 131–182; the sequence is SQASFLQRQFGALLQPGVNKFSLRMFGSQKAVEREQERVKSAGAWIIHPYSD. Residues 189 to 209 form a helical membrane-spanning segment; it reads FTMLLFMVGNLIIIPVGITFF. Over 210–213 the chain is Extracellular; that stretch reads KDET. A helical membrane pass occupies residues 214 to 234; that stretch reads TAPWIVFNVVSDTFFLMDLVL. The Cytoplasmic portion of the chain corresponds to 235 to 261; it reads NFRTGIVIEDNTEIILDPEKIKKKYLR. Residues 262-282 traverse the membrane as a helical segment; sequence TWFVVDFVSSIPVDYIFLIVE. The Extracellular portion of the chain corresponds to 283–290; the sequence is KGIDSEVY. A helical; Voltage-sensor transmembrane segment spans residues 291-311; the sequence is KTARALRIVRFTKILSLLRLL. Over 312–342 the chain is Cytoplasmic; the sequence is RLSRLIRYIHQWEEIFHMTYDLASAVMRICN. The helical transmembrane segment at 343 to 363 threads the bilayer; sequence LISMMLLLCHWDGCLQFLVPM. The Extracellular segment spans residues 364–386; that stretch reads LQDFPSDCWVSINNMVNHSWSEL. The N-linked (GlcNAc...) asparagine glycan is linked to Asn-380. Positions 387–408 form an intramembrane region, pore-forming; that stretch reads YSFALFKAMSHMLCIGYGRQAP. Residues 409 to 413 are Extracellular-facing; the sequence is ESMTD. A helical transmembrane segment spans residues 414–434; it reads IWLTMLSMIVGATCYAMFIGH. The Cytoplasmic portion of the chain corresponds to 435–863; the sequence is ATALIQSLDS…SARSRLSSNL (429 aa). 3',5'-cyclic AMP is bound by residues Gly-581, Glu-582, Cys-584, Arg-591, Thr-592, and Arg-632. Residue Ser-641 is modified to Phosphoserine; by PKG/PRKG2. Phosphoserine is present on Ser-726. The residue at position 728 (Arg-728) is an Omega-N-methylarginine. The segment at 730–863 is disordered; it reads VRRAPPGPLP…SARSRLSSNL (134 aa). Pro residues predominate over residues 734–755; sequence PPGPLPPAASPGPPAASPPAAP. A phosphoserine mark is found at Ser-743, Ser-750, and Ser-757. 3 stretches are compositionally biased toward low complexity: residues 756 to 765, 778 to 800, and 808 to 834; these read SSPRAPRTSP, PALP…PSLP, and PAAS…AAPS. Phosphoserine is present on residues Ser-840, Ser-842, and Ser-847.

The protein belongs to the potassium channel HCN family. Homotetramer. The channel is composed of a homo- or heterotetrameric complex of pore-forming subunits. Heterotetramer with HCN1. Forms an obligate 4:4 complex with accessory subunit PEX5L; regulates HCN2 cell-surface expression and cyclic nucleotide dependence. Interacts with KCNE2. Post-translationally, S-palmitoylated. In terms of processing, N-glycosylated; required for cell surface trafficking of HCN2. Phosphorylation at Ser-641 by PRKG2 shifts the voltage-dependence to more negative voltages, hence counteracting the stimulatory effect of cGMP on gating. As to expression, highly expressed in brain. Detected at low levels in heart, in ventricle, atrium and in sinoatrial node (SAN).

The protein localises to the cell membrane. It catalyses the reaction Na(+)(in) = Na(+)(out). The enzyme catalyses K(+)(in) = K(+)(out). The catalysed reaction is NH4(+)(in) = NH4(+)(out). Its activity is regulated as follows. Activated by cAMP, and at 10-100 times higher concentrations, also by cGMP. cAMP binding causes a conformation change that leads to the assembly of an active tetramer and channel opening. In the absence of cAMP, the C-terminal region is thought to exert a tonic inhibition on the pore when HCN2 is in a non-tetrameric form. Channel activity is modulated by intracellular chloride ions and pH; acidic pH shifts the activation to more negative voltages. Phosphatidylinositol-4,5- bisphosphate (PIP(2)) acts as a ligand that allosterically opens HCN2 by shifting voltage-dependent channel activation toward depolarized potentials. Inhibited by extracellular cesium ions. Functionally, hyperpolarization-activated ion channel exhibiting weak selectivity for potassium over sodium ions. Contributes to the native pacemaker currents in heart (If) and in neurons (Ih). Can also transport ammonium in the distal nephron. Involved in the initiation of neuropathic pain in sensory neurons. This chain is Potassium/sodium hyperpolarization-activated cyclic nucleotide-gated channel 2, found in Mus musculus (Mouse).